The primary structure comprises 221 residues: Ribonuclease P protein subunit p29 (221 aa).

Residue Ser10 is modified to Phosphoserine.

The protein belongs to the eukaryotic/archaeal RNase P protein component 1 family. Component of nuclear RNase P and RNase MRP ribonucleoproteins. RNase P consists of a catalytic RNA moiety and 10 different protein chains; POP1, POP4, POP5, POP7, RPP14, RPP21, RPP25, RPP30, RPP38 and RPP40. Within the RNase P complex, POP1, POP7 and RPP25 form the 'finger' subcomplex, POP5, RPP14, RPP40 and homodimeric RPP30 form the 'palm' subcomplex, and RPP21, POP4 and RPP38 form the 'wrist' subcomplex. All subunits of the RNase P complex interact with the catalytic RNA. Several subunits of RNase P are also part of the RNase MRP complex. RNase MRP consists of a catalytic RNA moiety and about 8 protein subunits; POP1, POP7, RPP25, RPP30, RPP38, RPP40 and possibly also POP4 and POP5.

The protein localises to the nucleus. The protein resides in the nucleolus. Functionally, component of ribonuclease P, a ribonucleoprotein complex that generates mature tRNA molecules by cleaving their 5'-ends. The sequence is that of Ribonuclease P protein subunit p29 (Pop4) from Mus musculus (Mouse).